Here is a 317-residue protein sequence, read N- to C-terminus: Retinol dehydrogenase 16 (317 aa).

33–57 (FITGCDSGFGTLLARQLDRRGMRVL) lines the NAD(+) pocket. The active-site Proton acceptor is the tyrosine 176. The chain crosses the membrane as a helical span at residues 289-309 (LFYLPLSYLPTFLVDALLYWT).

It belongs to the short-chain dehydrogenases/reductases (SDR) family. Homodimer. Post-translationally, not glycosylated.

The protein resides in the endoplasmic reticulum membrane. It localises to the microsome membrane. It carries out the reaction all-trans-retinol--[retinol-binding protein] + NAD(+) = all-trans-retinal--[retinol-binding protein] + NADH + H(+). The catalysed reaction is 9-cis-retinol + NAD(+) = 9-cis-retinal + NADH + H(+). It catalyses the reaction 11-cis-retinol + NAD(+) = 11-cis-retinal + NADH + H(+). The enzyme catalyses 13-cis-retinol + NAD(+) = 13-cis-retinal + NADH + H(+). It carries out the reaction androsterone + NAD(+) = 5alpha-androstan-3,17-dione + NADH + H(+). The catalysed reaction is 5alpha-androstane-3alpha,17beta-diol + NAD(+) = 17beta-hydroxy-5alpha-androstan-3-one + NADH + H(+). The protein operates within cofactor metabolism; retinol metabolism. Its function is as follows. Oxidoreductase with a preference for NAD. Oxidizes all-trans-retinol, 9-cis-retinol, 11-cis-retinol and 13-cis-retinol to the corresponding aldehydes. Has higher activity towards CRBP-bound retinol than with free retinol. Oxidizes 3-alpha-hydroxysteroids. Oxidizes androstanediol and androsterone to dihydrotestosterone and androstanedione. Can also catalyze the reverse reaction. This is Retinol dehydrogenase 16 from Mus musculus (Mouse).